The following is a 485-amino-acid chain: Glycogen synthase (485 aa).

Lysine 15 provides a ligand contact to ADP-alpha-D-glucose.

Belongs to the glycosyltransferase 1 family. Bacterial/plant glycogen synthase subfamily.

The catalysed reaction is [(1-&gt;4)-alpha-D-glucosyl](n) + ADP-alpha-D-glucose = [(1-&gt;4)-alpha-D-glucosyl](n+1) + ADP + H(+). Its pathway is glycan biosynthesis; glycogen biosynthesis. Its function is as follows. Synthesizes alpha-1,4-glucan chains using ADP-glucose. The chain is Glycogen synthase from Thermosipho africanus (strain TCF52B).